A 1489-amino-acid chain; its full sequence is Ras GTPase-activating-like protein rng2 (1489 aa).

One can recognise a Calponin-homology (CH) domain in the interval Leu41–Leu147. 6 IQ domains span residues Gln359–Glu388, Leu389–Ala418, Ala418–Thr449, Glu535–Ala564, Ser565–Lys594, and Phe655–Lys684. Residues Glu734 to Leu770 adopt a coiled-coil conformation. The region spanning Val870 to Leu1110 is the Ras-GAP domain. The stretch at Gln1330–Lys1364 forms a coiled coil.

Interacts with calmodulin cam1.

It localises to the cytoplasm. Its subcellular location is the cytoskeleton. It is found in the nucleus envelope. The protein localises to the microtubule organizing center. The protein resides in the spindle pole body. Component of the contractile F-actin ring; required for its construction following assembly of F-actin at the division site. The chain is Ras GTPase-activating-like protein rng2 from Schizosaccharomyces pombe (strain 972 / ATCC 24843) (Fission yeast).